A 126-amino-acid chain; its full sequence is Holo-[acyl-carrier-protein] synthase (126 aa).

Mg(2+) contacts are provided by D8 and E57.

Belongs to the P-Pant transferase superfamily. AcpS family. It depends on Mg(2+) as a cofactor.

The protein localises to the cytoplasm. The catalysed reaction is apo-[ACP] + CoA = holo-[ACP] + adenosine 3',5'-bisphosphate + H(+). Its function is as follows. Transfers the 4'-phosphopantetheine moiety from coenzyme A to a Ser of acyl-carrier-protein. This is Holo-[acyl-carrier-protein] synthase from Vibrio cholerae serotype O1 (strain ATCC 39315 / El Tor Inaba N16961).